Here is a 158-residue protein sequence, read N- to C-terminus: Glycine/sarcosine/betaine reductase complex component A (158 aa).

Sec-44 is a catalytic residue. A non-standard amino acid (selenocysteine) is located at residue Sec-44.

This sequence belongs to the GrdA family. Monomer. Component of the glycine, sarcosine and betaine reductase complexes, together with components B and C.

It catalyses the reaction acetyl phosphate + [thioredoxin]-disulfide + NH4(+) + H2O = [thioredoxin]-dithiol + glycine + phosphate + H(+). It carries out the reaction acetyl phosphate + methylamine + [thioredoxin]-disulfide + H2O = sarcosine + [thioredoxin]-dithiol + phosphate + H(+). The enzyme catalyses acetyl phosphate + trimethylamine + [thioredoxin]-disulfide + H2O = glycine betaine + [thioredoxin]-dithiol + phosphate + H(+). Functionally, in the first step of glycine, betaine and sarcosine reductases, the substrate is bound to component PB via a Schiff base intermediate. Then the PB-activated substrate is nucleophilically attacked by the selenol anion of component PA to transform it to a carboxymethylated selenoether and the respective amine. By action of component PC, acetyl phosphate is formed, leaving component PA in its oxidized state. Finally component PA becomes reduced by the thioredoxin system to start a new catalytic cycle of reductive deamination. The chain is Glycine/sarcosine/betaine reductase complex component A from Alkaliphilus metalliredigens (strain QYMF).